We begin with the raw amino-acid sequence, 452 residues long: MEKLMTESGLKPVVIDSNQDLSRVYCGICSNIGDDDYDGDAVVVDGDLISTPFCSHKFCKACWSKYLKKNFFSVEKNHTAISCPDRDCRAAVGPETVEKLTVRDQAMYELYILKSYREKYLGWKLKLCPARGCNYVIEFHLASEDEEHSLNIVCLCGHIFCWRCMLESHRPVTCNNASDWLSRDLEKLIEEVDKPSTVSWIDANTKPCPHCFIPVEIDGERPWAQFLTCVCSGRFCWKCFRSPETHGTSGSCLAPARSSNVGFNHWNRAKPGISCLDLWNASQVNLVNAKYELEAFEESIIKKPSDLKEQDVKVLREGLMLIVQCRQFLKWSCAYDYIHTEYDMAKREYLRFLQQNASGIVHSFSQSIKEETEAKELTCGKLLSETTNIGNFFYHFIKTLREGLPEVQAESYDNYGGPYWLCDRCTYGNSWFQRACKMCCDPTASKMDELSD.

The interval S22–A256 is TRIAD supradomain. Zn(2+) contacts are provided by C26, C29, C54, H56, C59, C62, C83, C88, C128, C133, C154, C156, C161, C164, H169, C174, C208, C211, C229, C231, C236, C239, H246, and C252. The RING-type 1 zinc-finger motif lies at C26–C88. The segment at A106–C174 adopts an IBR-type zinc-finger fold. The segment at C208 to C239 adopts an RING-type 2; atypical zinc-finger fold. The segment at N414–S445 adopts a RanBP2-type zinc-finger fold.

It belongs to the RBR family. Ariadne subfamily. Zn(2+) is required as a cofactor. Ubiquitous.

The enzyme catalyses [E2 ubiquitin-conjugating enzyme]-S-ubiquitinyl-L-cysteine + [acceptor protein]-L-lysine = [E2 ubiquitin-conjugating enzyme]-L-cysteine + [acceptor protein]-N(6)-ubiquitinyl-L-lysine.. The protein operates within protein modification; protein ubiquitination. Its function is as follows. Might act as an E3 ubiquitin-protein ligase, or as part of E3 complex, which accepts ubiquitin from specific E2 ubiquitin-conjugating enzymes and then transfers it to substrates. This is Probable E3 ubiquitin-protein ligase ARI15 (ARI15) from Arabidopsis thaliana (Mouse-ear cress).